The following is a 155-amino-acid chain: Small ribosomal subunit protein uS7 (155 aa).

It belongs to the universal ribosomal protein uS7 family. Part of the 30S ribosomal subunit. Contacts proteins S9 and S11.

One of the primary rRNA binding proteins, it binds directly to 16S rRNA where it nucleates assembly of the head domain of the 30S subunit. Is located at the subunit interface close to the decoding center, probably blocks exit of the E-site tRNA. This chain is Small ribosomal subunit protein uS7, found in Prosthecochloris aestuarii (strain DSM 271 / SK 413).